The chain runs to 269 residues: Hydroxyethylthiazole kinase (269 aa).

Residue M42 coordinates substrate. ATP-binding residues include R118 and S164. Position 191 (G191) interacts with substrate.

It belongs to the Thz kinase family. It depends on Mg(2+) as a cofactor.

The enzyme catalyses 5-(2-hydroxyethyl)-4-methylthiazole + ATP = 4-methyl-5-(2-phosphooxyethyl)-thiazole + ADP + H(+). It functions in the pathway cofactor biosynthesis; thiamine diphosphate biosynthesis; 4-methyl-5-(2-phosphoethyl)-thiazole from 5-(2-hydroxyethyl)-4-methylthiazole: step 1/1. Functionally, catalyzes the phosphorylation of the hydroxyl group of 4-methyl-5-beta-hydroxyethylthiazole (THZ). This Listeria welshimeri serovar 6b (strain ATCC 35897 / DSM 20650 / CCUG 15529 / CIP 8149 / NCTC 11857 / SLCC 5334 / V8) protein is Hydroxyethylthiazole kinase.